We begin with the raw amino-acid sequence, 500 residues long: Cholesterol 24-hydroxylase (500 aa).

A helical transmembrane segment spans residues 3 to 23; that stretch reads PGLLLLGSAVLLAFGLCCTFV. A heme-binding site is contributed by Cys437.

This sequence belongs to the cytochrome P450 family. Heme serves as cofactor. As to expression, expressed in brain. The mRNA was broadly distributed with higher levels in gray matter zones and lower levels in regions rich in white matter. Not detected in fetal sample but its expression increases linearly with age.

It is found in the endoplasmic reticulum membrane. Its subcellular location is the microsome membrane. The protein resides in the postsynapse. The protein localises to the presynapse. It localises to the cell projection. It is found in the dendrite. The catalysed reaction is cholesterol + reduced [NADPH--hemoprotein reductase] + O2 = (24S)-hydroxycholesterol + oxidized [NADPH--hemoprotein reductase] + H2O + H(+). The enzyme catalyses cholestanol + reduced [NADPH--hemoprotein reductase] + O2 = (24S)-hydroxycholestanol + oxidized [NADPH--hemoprotein reductase] + H2O + H(+). It carries out the reaction 7-dehydrocholesterol + reduced [NADPH--hemoprotein reductase] + O2 = cholesta-5,7-dien-3beta,24S-diol + oxidized [NADPH--hemoprotein reductase] + H2O + H(+). It catalyses the reaction 7-dehydrocholesterol + reduced [NADPH--hemoprotein reductase] + O2 = cholesta-5,7-dien-3beta,25-diol + oxidized [NADPH--hemoprotein reductase] + H2O + H(+). The catalysed reaction is desmosterol + reduced [NADPH--hemoprotein reductase] + O2 = (24Z),26-hydroxydesmosterol + oxidized [NADPH--hemoprotein reductase] + H2O + H(+). The enzyme catalyses desmosterol + reduced [NADPH--hemoprotein reductase] + O2 = (24S)-25-epoxycholesterol + oxidized [NADPH--hemoprotein reductase] + H2O + H(+). It carries out the reaction 4beta-hydroxycholesterol + reduced [NADPH--hemoprotein reductase] + O2 = 4beta,24S-dihydroxycholesterol + oxidized [NADPH--hemoprotein reductase] + H2O + H(+). It catalyses the reaction (24S)-hydroxycholesterol + reduced [NADPH--hemoprotein reductase] + O2 = (24S,25R)-24,26-dihydroxycholesterol + oxidized [NADPH--hemoprotein reductase] + H2O + H(+). The catalysed reaction is (24S)-hydroxycholesterol + reduced [NADPH--hemoprotein reductase] + O2 = 24S,25-dihydroxycholesterol + oxidized [NADPH--hemoprotein reductase] + H2O + H(+). The enzyme catalyses 7alpha-hydroxycholesterol + reduced [NADPH--hemoprotein reductase] + O2 = (24S)-7alpha-dihydroxycholesterol + oxidized [NADPH--hemoprotein reductase] + H2O + H(+). It carries out the reaction progesterone + reduced [NADPH--hemoprotein reductase] + O2 = 17alpha-hydroxyprogesterone + oxidized [NADPH--hemoprotein reductase] + H2O + H(+). It catalyses the reaction testosterone + reduced [NADPH--hemoprotein reductase] + O2 = 16beta,17beta-dihydroxyandrost-4-en-3-one + oxidized [NADPH--hemoprotein reductase] + H2O + H(+). The catalysed reaction is testosterone + reduced [NADPH--hemoprotein reductase] + O2 = 2-hydroxytestosterone + oxidized [NADPH--hemoprotein reductase] + H2O + H(+). The enzyme catalyses testosterone + reduced [NADPH--hemoprotein reductase] + O2 = 6beta,17beta-dihydroxyandrost-4-en-3-one + oxidized [NADPH--hemoprotein reductase] + H2O + H(+). Its pathway is steroid metabolism; cholesterol degradation. It participates in lipid metabolism; C21-steroid hormone metabolism. Functionally, P450 monooxygenase that plays a major role in cholesterol homeostasis in the brain. Primarily catalyzes the hydroxylation (with S stereochemistry) at C-24 of cholesterol side chain, triggering cholesterol diffusion out of neurons and its further degradation. By promoting constant cholesterol elimination in neurons, may activate the mevalonate pathway and coordinate the synthesis of new cholesterol and nonsterol isoprenoids involved in synaptic activity and learning. Further hydroxylates cholesterol derivatives and hormone steroids on both the ring and side chain of these molecules, converting them into active oxysterols involved in lipid signaling and biosynthesis. Acts as an epoxidase converting cholesta-5,24-dien-3beta-ol/desmosterol into (24S),25-epoxycholesterol, an abundant lipid ligand of nuclear NR1H2 and NR1H3 receptors shown to promote neurogenesis in developing brain. May also catalyze the oxidative metabolism of xenobiotics, such as clotrimazole. This Homo sapiens (Human) protein is Cholesterol 24-hydroxylase.